The chain runs to 231 residues: Ribose-5-phosphate isomerase A (231 aa).

Residues 40-43 (TGST), 93-96 (DGAD), and 106-109 (KGGG) each bind substrate. Residue glutamate 115 is the Proton acceptor of the active site. Lysine 133 serves as a coordination point for substrate.

Belongs to the ribose 5-phosphate isomerase family. Homodimer.

It catalyses the reaction aldehydo-D-ribose 5-phosphate = D-ribulose 5-phosphate. Its pathway is carbohydrate degradation; pentose phosphate pathway; D-ribose 5-phosphate from D-ribulose 5-phosphate (non-oxidative stage): step 1/1. Functionally, catalyzes the reversible conversion of ribose-5-phosphate to ribulose 5-phosphate. This Escherichia coli O6:K15:H31 (strain 536 / UPEC) protein is Ribose-5-phosphate isomerase A.